Here is a 352-residue protein sequence, read N- to C-terminus: Phosphatidylglycerol--prolipoprotein diacylglyceryl transferase (352 aa).

Transmembrane regions (helical) follow at residues 20–40 (WYGLSYMMGFICAYILITWLA), 55–75 (FITYAAIGTLVGGRLGYVLFY), 97–117 (EGGMASHGGIIGIVIACLLYA), and 122–142 (VNSLYLLDLVAVTGPIGVFFG). Arginine 143 is a binding site for a 1,2-diacyl-sn-glycero-3-phospho-(1'-sn-glycerol). 3 helical membrane-spanning segments follow: residues 248–268 (SQLFAAFGEGLLIFMFLFFLW), 275–295 (GFIAACFVLIYAVVRVVDEHF), and 314–334 (WLSLAMFVVGLILMVVWTRAA).

It belongs to the Lgt family.

It localises to the cell inner membrane. It carries out the reaction L-cysteinyl-[prolipoprotein] + a 1,2-diacyl-sn-glycero-3-phospho-(1'-sn-glycerol) = an S-1,2-diacyl-sn-glyceryl-L-cysteinyl-[prolipoprotein] + sn-glycerol 1-phosphate + H(+). It participates in protein modification; lipoprotein biosynthesis (diacylglyceryl transfer). In terms of biological role, catalyzes the transfer of the diacylglyceryl group from phosphatidylglycerol to the sulfhydryl group of the N-terminal cysteine of a prolipoprotein, the first step in the formation of mature lipoproteins. This chain is Phosphatidylglycerol--prolipoprotein diacylglyceryl transferase, found in Bdellovibrio bacteriovorus (strain ATCC 15356 / DSM 50701 / NCIMB 9529 / HD100).